A 436-amino-acid chain; its full sequence is Phosphoribosylamine--glycine ligase (436 aa).

The region spanning 106–318 is the ATP-grasp domain; that stretch reads RKLFEDYRIP…MLEICEGIVD (213 aa). ATP is bound at residue 133-196; sequence MEDFDSEAVV…EERVVGEEFT (64 aa). The Mg(2+) site is built by Gln-276, Glu-288, and Asn-290. Mn(2+) is bound by residues Gln-276, Glu-288, and Asn-290.

Belongs to the GARS family. Mg(2+) is required as a cofactor. Requires Mn(2+) as cofactor.

It carries out the reaction 5-phospho-beta-D-ribosylamine + glycine + ATP = N(1)-(5-phospho-beta-D-ribosyl)glycinamide + ADP + phosphate + H(+). It participates in purine metabolism; IMP biosynthesis via de novo pathway; N(1)-(5-phospho-D-ribosyl)glycinamide from 5-phospho-alpha-D-ribose 1-diphosphate: step 2/2. This Methanothermobacter thermautotrophicus (strain ATCC 29096 / DSM 1053 / JCM 10044 / NBRC 100330 / Delta H) (Methanobacterium thermoautotrophicum) protein is Phosphoribosylamine--glycine ligase.